We begin with the raw amino-acid sequence, 456 residues long: ATP-dependent protease ATPase subunit HslU (456 aa).

Residues Ile18, 60–65 (GVGKTE), Asp270, Glu334, and Arg406 contribute to the ATP site.

This sequence belongs to the ClpX chaperone family. HslU subfamily. As to quaternary structure, a double ring-shaped homohexamer of HslV is capped on each side by a ring-shaped HslU homohexamer. The assembly of the HslU/HslV complex is dependent on binding of ATP.

The protein resides in the cytoplasm. Functionally, ATPase subunit of a proteasome-like degradation complex; this subunit has chaperone activity. The binding of ATP and its subsequent hydrolysis by HslU are essential for unfolding of protein substrates subsequently hydrolyzed by HslV. HslU recognizes the N-terminal part of its protein substrates and unfolds these before they are guided to HslV for hydrolysis. This is ATP-dependent protease ATPase subunit HslU from Exiguobacterium sibiricum (strain DSM 17290 / CCUG 55495 / CIP 109462 / JCM 13490 / 255-15).